The primary structure comprises 58 residues: T-cell receptor gamma alternate reading frame protein (58 aa).

Detected at low levels in the ductal cells of the salivary gland but not in the acinar cells (at protein level). Expressed in endometrium (at protein level). Expressed in epithelial cells within the acinar ducts of the prostate.

The sequence is that of T-cell receptor gamma alternate reading frame protein from Homo sapiens (Human).